The following is a 395-amino-acid chain: Elongation factor Tu (395 aa).

The region spanning 10–204 (KPHLNIGTIG…AVDNWIEEPV (195 aa)) is the tr-type G domain. The interval 19–26 (GHVDHGKT) is G1. GTP is bound at residue 19 to 26 (GHVDHGKT). Position 26 (Thr-26) interacts with Mg(2+). The tract at residues 60 to 64 (GITIN) is G2. Residues 81-84 (DCPG) are G3. GTP-binding positions include 81–85 (DCPGH) and 136–139 (NKVD). The segment at 136-139 (NKVD) is G4. The G5 stretch occupies residues 174 to 176 (SAL).

Belongs to the TRAFAC class translation factor GTPase superfamily. Classic translation factor GTPase family. EF-Tu/EF-1A subfamily. As to quaternary structure, monomer.

The protein localises to the cytoplasm. It catalyses the reaction GTP + H2O = GDP + phosphate + H(+). In terms of biological role, GTP hydrolase that promotes the GTP-dependent binding of aminoacyl-tRNA to the A-site of ribosomes during protein biosynthesis. This is Elongation factor Tu from Flavobacterium johnsoniae (strain ATCC 17061 / DSM 2064 / JCM 8514 / BCRC 14874 / CCUG 350202 / NBRC 14942 / NCIMB 11054 / UW101) (Cytophaga johnsonae).